We begin with the raw amino-acid sequence, 542 residues long: MARYVFITGGVVSSLGKGIASAALGALLQARGYRVRLRKLDPYLNVDPGTMSPYQHGEVFVTDDGAETDLDLGHYERFTGRSANKRDNITTGRIYQNIIEKERRGDYLGATVQVIPHVTDEIKQFVLEGNEEFDFVLCEIGGTVGDIEAMPFLEAIRQLGNELPRGNAVYIHLTLMPWIPAAGELKTKPTQHSVKELRSIGIAPDILLVRADRPVPPEERRKLSLFCNVRESAVIQALDVAHIYDVPMAYHKEGLDSEVLAAFGIDPAPKPRMERWEEVSNRIHNPEGEVTIAIVGKYTGLKDAYKSLNEALTHGGIANRVRVKLDWIESEIFEKEDPAPWLEKVHGILVPGGFGERGSEGKILAAKFARERKVPYFGICFGMQMACIEAARSLAGIEKASSTEFGPTKEPVVGLMTEWLRGNMLEKRTAAGDLGGTMRLGAYEARLQPGSKIAEIYGSEEISERHRHRYEVNIGYREKLEACGLVFAGLSPDGVLPETIEYPDHPWFVGVQYHPELKSRPFEPHPLFASFIAAAVEQSRLV.

Residues 1–265 are amidoligase domain; that stretch reads MARYVFITGG…DSEVLAAFGI (265 aa). A CTP-binding site is contributed by S13. S13 is a UTP binding site. An ATP-binding site is contributed by 14-19; it reads SLGKGI. Position 54 (Y54) interacts with L-glutamine. Residue D71 participates in ATP binding. Residues D71 and E139 each coordinate Mg(2+). CTP-binding positions include 146–148, 186–191, and K222; these read DIE and KTKPTQ. UTP is bound by residues 186–191 and K222; that span reads KTKPTQ. The Glutamine amidotransferase type-1 domain occupies 291–541; it reads TIAIVGKYTG…IAAAVEQSRL (251 aa). G353 provides a ligand contact to L-glutamine. The Nucleophile; for glutamine hydrolysis role is filled by C380. Residues 381 to 384, E404, and R469 each bind L-glutamine; that span reads FGMQ. Catalysis depends on residues H514 and E516.

Belongs to the CTP synthase family. Homotetramer.

It carries out the reaction UTP + L-glutamine + ATP + H2O = CTP + L-glutamate + ADP + phosphate + 2 H(+). The enzyme catalyses L-glutamine + H2O = L-glutamate + NH4(+). It catalyses the reaction UTP + NH4(+) + ATP = CTP + ADP + phosphate + 2 H(+). The protein operates within pyrimidine metabolism; CTP biosynthesis via de novo pathway; CTP from UDP: step 2/2. Its activity is regulated as follows. Allosterically activated by GTP, when glutamine is the substrate; GTP has no effect on the reaction when ammonia is the substrate. The allosteric effector GTP functions by stabilizing the protein conformation that binds the tetrahedral intermediate(s) formed during glutamine hydrolysis. Inhibited by the product CTP, via allosteric rather than competitive inhibition. Catalyzes the ATP-dependent amination of UTP to CTP with either L-glutamine or ammonia as the source of nitrogen. Regulates intracellular CTP levels through interactions with the four ribonucleotide triphosphates. The chain is CTP synthase from Chelativorans sp. (strain BNC1).